The sequence spans 329 residues: MVSSFSVPMPVKRIFDTFPLQTYAAQTDKDEAVALEIQRRSYTFTERGGGSSELTVEGTYKLGVYNVFLEANTGAALATDPWCLFVQLALCQKNGLVLPTHSQEQTPSHTCNHEMLVLSRLSNPDEALPILVEGYKKRIIRSTVAISEIMRSRILDDAEQLMYYTLLDTVLYDCWITQIIFCASDAQFMELYSCQKLSGSIVTPLDVENSLLQKLSAKSLKISLTKRNKFQFRHREIVKSMQGVYHNHHNSVNQEQVLNVLFENSKQVLLGLKDMLKSDGQPTYLHLKIASYILCITNVKEPIKLKTFVENECKELVQFAQDTLKNFVQ.

Component of the mitochondrial outer membrane sorting assembly machinery (SAM or TOB) complex, which at least consists of SAM35, SAM37 and SAM50.

It localises to the mitochondrion outer membrane. In terms of biological role, essential component of the mitochondrial outer membrane sorting assembly machinery (SAM or TOB) complex, which is required for the sorting of proteins with complicated topology, such as beta-barrel proteins, to the mitochondrial outer membrane after import by the TOM complex. This chain is Sorting assembly machinery 35 kDa subunit (SAM35), found in Saccharomyces cerevisiae (strain ATCC 204508 / S288c) (Baker's yeast).